The following is a 151-amino-acid chain: UPF0208 membrane protein YfbV (151 aa).

Transmembrane regions (helical) follow at residues 46 to 65 (FGIRFMPPLAIFTLTWQIAL) and 69 to 91 (LGPAVATALFACSLPMQGLWWLG).

This sequence belongs to the UPF0208 family.

The protein resides in the cell inner membrane. The sequence is that of UPF0208 membrane protein YfbV (yfbV) from Photorhabdus temperata.